An 82-amino-acid chain; its full sequence is Small ribosomal subunit protein uS17 (82 aa).

This sequence belongs to the universal ribosomal protein uS17 family. In terms of assembly, part of the 30S ribosomal subunit.

Functionally, one of the primary rRNA binding proteins, it binds specifically to the 5'-end of 16S ribosomal RNA. In Tolumonas auensis (strain DSM 9187 / NBRC 110442 / TA 4), this protein is Small ribosomal subunit protein uS17.